The sequence spans 383 residues: Succinyl-diaminopimelate desuccinylase (383 aa).

His72 lines the Zn(2+) pocket. Asp74 is a catalytic residue. Asp105 contributes to the Zn(2+) binding site. Residue Glu139 is the Proton acceptor of the active site. Zn(2+) is bound by residues Glu140, Glu168, and His356.

Belongs to the peptidase M20A family. DapE subfamily. Homodimer. The cofactor is Zn(2+). Co(2+) is required as a cofactor.

The enzyme catalyses N-succinyl-(2S,6S)-2,6-diaminopimelate + H2O = (2S,6S)-2,6-diaminopimelate + succinate. It functions in the pathway amino-acid biosynthesis; L-lysine biosynthesis via DAP pathway; LL-2,6-diaminopimelate from (S)-tetrahydrodipicolinate (succinylase route): step 3/3. Functionally, catalyzes the hydrolysis of N-succinyl-L,L-diaminopimelic acid (SDAP), forming succinate and LL-2,6-diaminopimelate (DAP), an intermediate involved in the bacterial biosynthesis of lysine and meso-diaminopimelic acid, an essential component of bacterial cell walls. The sequence is that of Succinyl-diaminopimelate desuccinylase from Beijerinckia indica subsp. indica (strain ATCC 9039 / DSM 1715 / NCIMB 8712).